The sequence spans 841 residues: uncharacterized protein (841 aa).

Residues 1–31 (MKIERYFKAIARAFIITFLFSLILQDNGVLA) form the signal peptide.

Its subcellular location is the secreted. This is an uncharacterized protein from Schizosaccharomyces pombe (strain 972 / ATCC 24843) (Fission yeast).